Reading from the N-terminus, the 1176-residue chain is Nitrite reductase [NAD(P)H] (1176 aa).

The disordered stretch occupies residues 1-23; the sequence is MANTSLDMASSTSPSPSPESTTT. Low complexity predominate over residues 10–23; it reads SSTSPSPSPESTTT. Residue 26 to 60 participates in FAD binding; sequence KRIVVVGLGMVGIAFIEKLIKLDTQRQYEIVVIGE. Position 183 to 215 (183 to 215) interacts with NAD(+); sequence STGVVVGGGLLGLEAAKALMDLQVFGRVVVIER. [2Fe-2S] cluster contacts are provided by Cys496, Cys498, Cys531, and Cys534. 4 residues coordinate [4Fe-4S] cluster: Cys717, Cys723, Cys757, and Cys761. Cys761 provides a ligand contact to siroheme. Residues 942–1094 enclose the Rieske; atypical domain; that stretch reads SYFQGADDLP…VEERDDGMVY (153 aa). 2 residues coordinate [2Fe-2S] cluster: Cys981 and His983. 2 stretches are compositionally biased toward low complexity: residues 998 to 1008 and 1030 to 1049; these read PSPSSCSSSAL and PTSS…TNPS. The disordered stretch occupies residues 998 to 1051; it reads PSPSSCSSSALPPSPPSTPPRSSSPVTSPPQSPTSSATPATTASSSCTTNPSGP. Residues Cys1058 and His1061 each coordinate [2Fe-2S] cluster. Residues 1124-1139 show a composition bias toward basic and acidic residues; the sequence is LRELDELNKSKGVEGK. The tract at residues 1124-1157 is disordered; that stretch reads LRELDELNKSKGVEGKKGRRGRKPGASEAGKEVG.

It belongs to the nitrite and sulfite reductase 4Fe-4S domain family. As to quaternary structure, homodimer. Requires siroheme as cofactor. [4Fe-4S] cluster serves as cofactor. The cofactor is FAD. It depends on [2Fe-2S] cluster as a cofactor.

It catalyses the reaction NH4(+) + 3 NADP(+) + 2 H2O = nitrite + 3 NADPH + 5 H(+). It carries out the reaction NH4(+) + 3 NAD(+) + 2 H2O = nitrite + 3 NADH + 5 H(+). The protein operates within nitrogen metabolism; nitrate reduction (assimilation). This is Nitrite reductase [NAD(P)H] (nit-6) from Neurospora crassa (strain ATCC 24698 / 74-OR23-1A / CBS 708.71 / DSM 1257 / FGSC 987).